We begin with the raw amino-acid sequence, 195 residues long: HTH-type transcriptional regulator BetI (195 aa).

The region spanning 8–68 (PIRRQQLIEA…ATMRYLISHL (61 aa)) is the HTH tetR-type domain. Residues 31–50 (SIVQIARRAGVSNGIISHYF) constitute a DNA-binding region (H-T-H motif).

The protein operates within amine and polyamine biosynthesis; betaine biosynthesis via choline pathway [regulation]. Repressor involved in the biosynthesis of the osmoprotectant glycine betaine. It represses transcription of the choline transporter BetT and the genes of BetAB involved in the synthesis of glycine betaine. This chain is HTH-type transcriptional regulator BetI, found in Pectobacterium carotovorum subsp. carotovorum (strain PC1).